Here is a 684-residue protein sequence, read N- to C-terminus: NAD(P)H-quinone oxidoreductase subunit 5, chloroplastic (684 aa).

14 helical membrane passes run 16–36 (WAFPSILLLSIVMIFSTXLSI), 65–85 (IDPLTSIMSMLXTTVGIMVLI), 96–116 (GYLIFFAYMSFFSTSMLGLVT), 123–143 (IYIFWELVGMCSYLLIGFWFT), 161–181 (GDFGLLLGILGFYWITGSFEF), 206–226 (AALLFAGAVAKSAQFPLHVWL), 234–254 (TPISALIHAATMVAAGIFLVA), 256–276 (LLPLFIVIPYIMNFISLIGII), 303–323 (LXYMMLALGMGSYRSALFHLI), 330–350 (ALLFLGSGSVIHSMETIVGYS), 372–392 (TSFLLGTLSLCGIPPLACFWS), 401–421 (WLYSPIFAIIAWATAGLTAFY), 524–544 (LFPLLVLVLFTLFVGILGIPF), and 583–603 (IFSVSIASFGIFLASXLYKPI).

This sequence belongs to the complex I subunit 5 family. In terms of assembly, NDH is composed of at least 16 different subunits, 5 of which are encoded in the nucleus.

It is found in the plastid. It localises to the chloroplast thylakoid membrane. The enzyme catalyses a plastoquinone + NADH + (n+1) H(+)(in) = a plastoquinol + NAD(+) + n H(+)(out). It catalyses the reaction a plastoquinone + NADPH + (n+1) H(+)(in) = a plastoquinol + NADP(+) + n H(+)(out). Functionally, NDH shuttles electrons from NAD(P)H:plastoquinone, via FMN and iron-sulfur (Fe-S) centers, to quinones in the photosynthetic chain and possibly in a chloroplast respiratory chain. The immediate electron acceptor for the enzyme in this species is believed to be plastoquinone. Couples the redox reaction to proton translocation, and thus conserves the redox energy in a proton gradient. This is NAD(P)H-quinone oxidoreductase subunit 5, chloroplastic (ndhF) from Sesamum indicum (Oriental sesame).